We begin with the raw amino-acid sequence, 417 residues long: Squamosa promoter-binding-like protein 14 (417 aa).

2 stretches are compositionally biased toward gly residues: residues 1–26 (MEMA…GGGG) and 51–60 (AGGGGTGSGS). Disordered regions lie at residues 1 to 32 (MEMA…EHRQ) and 51 to 102 (AGGG…PPPP). Over residues 61–74 (GSASAAPPSSSSKA) the composition is skewed to low complexity. A compositionally biased stretch (gly residues) spans 75 to 84 (AGGGRGGGGK). The SBP-type zinc finger occupies 101–178 (PPRCQVEGCG…AGHNERRRRP (78 aa)). Zn(2+) is bound by residues C104, C109, C126, H129, C145, C148, and H152. The Bipartite nuclear localization signal signature appears at 161 to 177 (KRSCRRRLAGHNERRRR). S163 bears the Phosphoserine mark. A Zn(2+)-binding site is contributed by C164. The interval 387–417 (LQGNGPAPAPRIDPGSGSTFDQTSNTMDWSL) is disordered. A compositionally biased stretch (polar residues) spans 402-417 (SGSTFDQTSNTMDWSL).

Interacts with PCF1 and PCF2. Interacts with IPI1. Interacts with D53. Interacts with SLR1. Interacts (via C-terminus) with SHI1. Post-translationally, phosphorylated at Ser-163 in response to infection by the fungal pathogen Magnaporthe oryzae. Ubiquitinated by IPI1, which leads to proteasomal degradation. In terms of tissue distribution, expressed in young panicles. Expressed in the shoot apex at both the vegetative and reproductive stages. Highly expressed in the promordia of primary and secondary branches. Highly expressed in young panicles.

The protein localises to the nucleus. In terms of biological role, transcriptional activator that binds to the SBP-box DNA core binding motif 5'-GTAC-3'. Can target the TCP motif 5'-TGGGCC/T-3' through interaction with PCF1 and PCF2. Key regulator of the plant architecture that controls shoot branching and panicle development. Promotes panicle branching. Promotes high grain yield. Binds to the promoters of TB1 and DEP1. Suppresses rice tillering mainly through positive regulation of TB1. Regulates plant height and panicle length through positive regulation of DEP1. Repressed by D53 in strigolactone (SL) signaling. Acts with D53 to mediate the SL-regulated tiller development. Functions as a direct downstream component of D53 in regulating tiller number and SL-induced gene expression. Binds directly to the D53 promoter and plays a critical role in the negative feedback regulation of SL-induced D53 expression. Involved in defense response against pathogens. Phosphorylated at Ser-163 in response to infection by the fungal pathogen Magnaporthe oryzae. Phosphorylation reduces SPL14/IPA1 binding to the GTAC site in the DEP1 promoter and enhances binding to the TGGGCC site in the WRKY45 promoter. Binding to the promoter of the pathogen defense gene WRKY45 activates its expression, leading to enhanced disease resistance. Reduces gibberellin-mediated disease susceptibility by stabilizing SLR1. Possesses transactivation activity in yeast cells. The sequence is that of Squamosa promoter-binding-like protein 14 from Oryza sativa subsp. japonica (Rice).